The following is a 198-amino-acid chain: Imidazoleglycerol-phosphate dehydratase (198 aa).

Belongs to the imidazoleglycerol-phosphate dehydratase family.

The protein resides in the cytoplasm. It catalyses the reaction D-erythro-1-(imidazol-4-yl)glycerol 3-phosphate = 3-(imidazol-4-yl)-2-oxopropyl phosphate + H2O. Its pathway is amino-acid biosynthesis; L-histidine biosynthesis; L-histidine from 5-phospho-alpha-D-ribose 1-diphosphate: step 6/9. In Methylobacillus flagellatus (strain ATCC 51484 / DSM 6875 / VKM B-1610 / KT), this protein is Imidazoleglycerol-phosphate dehydratase.